The sequence spans 478 residues: Signal recognition particle receptor FtsY (478 aa).

2 stretches are compositionally biased toward basic and acidic residues: residues 14 to 33 (KDKAETEERPQEDAALERGN) and 45 to 56 (AEAHDAVDKDPV). A disordered region spans residues 14-94 (KDKAETEERP…DAPLLPGAEL (81 aa)). The span at 71-86 (EAVDVAPAEDDEEEDA) shows a compositional bias: acidic residues. GTP is bound by residues 283–290 (GVNGTGKT), 365–369 (DTAGR), and 429–432 (TKLD).

Belongs to the GTP-binding SRP family. FtsY subfamily. As to quaternary structure, part of the signal recognition particle protein translocation system, which is composed of SRP and FtsY. SRP is a ribonucleoprotein composed of Ffh and a 4.5S RNA molecule.

It localises to the cell inner membrane. It is found in the cytoplasm. It carries out the reaction GTP + H2O = GDP + phosphate + H(+). Its function is as follows. Involved in targeting and insertion of nascent membrane proteins into the cytoplasmic membrane. Acts as a receptor for the complex formed by the signal recognition particle (SRP) and the ribosome-nascent chain (RNC). Interaction with SRP-RNC leads to the transfer of the RNC complex to the Sec translocase for insertion into the membrane, the hydrolysis of GTP by both Ffh and FtsY, and the dissociation of the SRP-FtsY complex into the individual components. This Agrobacterium fabrum (strain C58 / ATCC 33970) (Agrobacterium tumefaciens (strain C58)) protein is Signal recognition particle receptor FtsY.